The chain runs to 22 residues: Peroxidase 5 (22 aa).

This sequence belongs to the peroxidase family. Classical plant (class III) peroxidase subfamily. Heme b is required as a cofactor. Requires Ca(2+) as cofactor.

It is found in the secreted. The protein localises to the cell wall. The enzyme catalyses 2 a phenolic donor + H2O2 = 2 a phenolic radical donor + 2 H2O. Removal of H(2)O(2), oxidation of toxic reductants, biosynthesis and degradation of lignin, suberization, auxin catabolism, response to environmental stresses such as wounding, pathogen attack and oxidative stress. These functions might be dependent on each isozyme/isoform in each plant tissue. This Cycas revoluta (Sago palm) protein is Peroxidase 5.